The following is a 428-amino-acid chain: Adenylosuccinate synthetase (428 aa).

Residues 12–18 and 40–42 each bind GTP; these read GDEGKGK and GHT. Asp-13 acts as the Proton acceptor in catalysis. Residues Asp-13 and Gly-40 each coordinate Mg(2+). Residues 13-16, 38-41, Thr-130, Arg-144, Gln-225, Thr-240, and Arg-304 each bind IMP; these read DEGK and NAGH. The active-site Proton donor is the His-41. 300–306 contacts substrate; it reads VTTGRAR. Residues Arg-306, 332–334, and 414–416 contribute to the GTP site; these read KID and SVG.

It belongs to the adenylosuccinate synthetase family. Homodimer. Mg(2+) is required as a cofactor.

It is found in the cytoplasm. It carries out the reaction IMP + L-aspartate + GTP = N(6)-(1,2-dicarboxyethyl)-AMP + GDP + phosphate + 2 H(+). It participates in purine metabolism; AMP biosynthesis via de novo pathway; AMP from IMP: step 1/2. Functionally, plays an important role in the de novo pathway of purine nucleotide biosynthesis. Catalyzes the first committed step in the biosynthesis of AMP from IMP. This Clostridium acetobutylicum (strain ATCC 824 / DSM 792 / JCM 1419 / IAM 19013 / LMG 5710 / NBRC 13948 / NRRL B-527 / VKM B-1787 / 2291 / W) protein is Adenylosuccinate synthetase.